A 363-amino-acid chain; its full sequence is Nicotinamide adenine dinucleotide transporter 2, mitochondrial (363 aa).

3 Solcar repeats span residues 15 to 107 (REVA…LKDV), 115 to 203 (LSIG…IKQY), and 215 to 305 (LSPG…MLRF). 6 helical membrane passes run 21–41 (AGAG…LDVI), 82–102 (GLSP…SVYG), 121–141 (MIAA…LWVV), 176–196 (LYSG…QFPA), 215–235 (LSPG…SILT), and 277–299 (LYRG…FTTY). A disordered region spans residues 313 to 363 (ETNRSDDRRREEERKNLVSRRGEEEDKDLGLRESQTQSNKISTPHIPLGSK). A compositionally biased stretch (basic and acidic residues) spans 315 to 343 (NRSDDRRREEERKNLVSRRGEEEDKDLGL). The segment covering 345-354 (ESQTQSNKIS) has biased composition (polar residues).

This sequence belongs to the mitochondrial carrier (TC 2.A.29) family. Highly expressed in young meristematic shoot area, vascular bundles of leaves, developing siliques including the funiculi, petal veins, developing pollen and central cylinder of roots.

The protein localises to the mitochondrion membrane. With respect to regulation, inhibited by pyridoxal 5'-phosphate, bathophenanthroline, tannic acid, mersalyl, mercuric chloride, p-hydroxymercuribenzoate, p-hydroxymercuribenzoate sulfonate, bromocresol purple and N-ethylmaleimide. Functionally, mediates the NAD(+) import into chloroplast. Favors the NAD(+)(in)/ADP or AMP(out) antiport exchange, but is also able to catalyze a low unidirectional transport (uniport) of NAD(+). Transports NAD(+), nicotinic acid adenine dinucleotide, nicotinamide mononucleotide, nicotinic acid mononucleotide, FAD, FMN, TTP, TDP, TMP, UTP, UDP, UMP, CTP, CDP, CMP, GTP, GDP, GMP, 3'-AMP, ATP, ADP and AMP, has low transport activity with cAMP, NADH and alpha-NAD(+), and has no activity with NADP(+), NADPH, nicotinamide, nicotinic acid, adenosine, thiamine mono- or diphosphate, inorganic phosphate, CoA, folate, NaCl, malate, malonate, citrate, fumarate, aspartate, glutamate, S-adenosylmethionine, lysine, arginine, and ornithine. This chain is Nicotinamide adenine dinucleotide transporter 2, mitochondrial (NDT2), found in Arabidopsis thaliana (Mouse-ear cress).